We begin with the raw amino-acid sequence, 660 residues long: MEFKLHSKYKPTGDQPQAIEQLVKGFKEGNQFETLLGVTGSGKTFTMANVIAALNKPTLIISHNKTLAGQLYGEMKEFFPENAVEYFVSYYDYYQPEAYVPQSDTYIAKDSSVNDEIDKLRLSATAALTERKDVIVVASVSCIYGLGSPDEWTGMSISLRPGQERDRDDLARALIDLQYTRNDMDFHRGTFRVHGDVLDIFPANADDTAIRVEFFGDEIDRIVEVDVLTGEVKCSLEHTMIFPASHYVVSQEKINEACLNIEKELDERVKYFKGEDKLIEAQRIAERTNFDIEMMRETGFCSGIENYTRHLNFAKPGEPPMTLIDFFPDDFLIIVDESHITIPQIGGMYAGDRSRKTTLVDYGFRLPSALDNRPLNFEEFEGKIDQMLFVSATPNKYENEHELLRAEQIIRPTGLLDPEISVRPVEGQIDDLVSEVNKETANHHKVLITTLTKRMAEDLTNYMAELGIRVKYLHSDIDTLERAEIIRDLRLDVFDVLVGINLLREGLDIPEITLVAILDADKEGFLRSETSLIQTIGRAARNSEGHVIMYADKITDSMRVAIDETKRRRKVQEEYNEAHGITPQTIQKSVRDLIAISKKVAADENALDKDPESMSKKELEKHIADIEKKMKKAAAELNFEAAAEYRDKLIMLKNTLRDIR.

The region spanning 24 to 177 (KGFKEGNQFE…DDLARALIDL (154 aa)) is the Helicase ATP-binding domain. 37–44 (GVTGSGKT) provides a ligand contact to ATP. The Beta-hairpin motif lies at 90–113 (YYDYYQPEAYVPQSDTYIAKDSSV). The region spanning 428-594 (QIDDLVSEVN…TIQKSVRDLI (167 aa)) is the Helicase C-terminal domain. The region spanning 620–655 (EKHIADIEKKMKKAAAELNFEAAAEYRDKLIMLKNT) is the UVR domain.

Belongs to the UvrB family. Forms a heterotetramer with UvrA during the search for lesions. Interacts with UvrC in an incision complex.

The protein localises to the cytoplasm. Functionally, the UvrABC repair system catalyzes the recognition and processing of DNA lesions. A damage recognition complex composed of 2 UvrA and 2 UvrB subunits scans DNA for abnormalities. Upon binding of the UvrA(2)B(2) complex to a putative damaged site, the DNA wraps around one UvrB monomer. DNA wrap is dependent on ATP binding by UvrB and probably causes local melting of the DNA helix, facilitating insertion of UvrB beta-hairpin between the DNA strands. Then UvrB probes one DNA strand for the presence of a lesion. If a lesion is found the UvrA subunits dissociate and the UvrB-DNA preincision complex is formed. This complex is subsequently bound by UvrC and the second UvrB is released. If no lesion is found, the DNA wraps around the other UvrB subunit that will check the other stand for damage. The polypeptide is UvrABC system protein B (Agathobacter rectalis (strain ATCC 33656 / DSM 3377 / JCM 17463 / KCTC 5835 / VPI 0990) (Eubacterium rectale)).